The primary structure comprises 360 residues: Phospho-N-acetylmuramoyl-pentapeptide-transferase (360 aa).

10 helical membrane-spanning segments follow: residues 21 to 41, 73 to 93, 94 to 114, 132 to 152, 168 to 188, 199 to 219, 235 to 255, 263 to 283, 288 to 308, and 338 to 358; these read YITV…LWIG, TMGG…WANL, ANPY…IGFV, WKYF…YAIG, IMPQ…VGTS, GLAI…AWAT, FSAE…GFLW, VFMG…VAVL, FLLV…ILQV, and VIVR…VTLK.

It belongs to the glycosyltransferase 4 family. MraY subfamily. Mg(2+) is required as a cofactor.

The protein localises to the cell inner membrane. The catalysed reaction is UDP-N-acetyl-alpha-D-muramoyl-L-alanyl-gamma-D-glutamyl-meso-2,6-diaminopimeloyl-D-alanyl-D-alanine + di-trans,octa-cis-undecaprenyl phosphate = di-trans,octa-cis-undecaprenyl diphospho-N-acetyl-alpha-D-muramoyl-L-alanyl-D-glutamyl-meso-2,6-diaminopimeloyl-D-alanyl-D-alanine + UMP. It participates in cell wall biogenesis; peptidoglycan biosynthesis. Functionally, catalyzes the initial step of the lipid cycle reactions in the biosynthesis of the cell wall peptidoglycan: transfers peptidoglycan precursor phospho-MurNAc-pentapeptide from UDP-MurNAc-pentapeptide onto the lipid carrier undecaprenyl phosphate, yielding undecaprenyl-pyrophosphoryl-MurNAc-pentapeptide, known as lipid I. In Pasteurella multocida (strain Pm70), this protein is Phospho-N-acetylmuramoyl-pentapeptide-transferase.